The following is a 1368-amino-acid chain: MQYSFTEKKRIRKSFAKRPIVHQVPFLLATQLESFSTFLQAEVPTAQRKPEGLQAAFTSVFPIVSHNGFARLEFVSYMLSPPAFNIKECQQRGLTYCSALRAKVRLVLLDKESPSKPVVKEVKEQEVYMGEIPLMTPTGSFVINGTERVIVSQLHRSPGVFFEHDKGKTHSSGKLLFSARIIPYRGSWLDFEFDPKDVLYFRVDRRRKMPVTILLKAIGLTPEQILANFFVFDNFTLMPEGAQMEFVPERLRGEVARFDITDRDGKVIVQKDKRINAKHIRDLENAKTKYISVPEDYLLGRVLAKNVVDGDTGEVIANANDEVTESVLDKLREAKIKDIQTLYTNDLDQGPYISSTLRIDETADKMAARIAIYRMMRPGEPPTEEAVEALFNRLFYSEEAYDLSKVGRMKFNRRVGRDEIVGPMTLQDDDILATIKILVELRNGKGEVDDIDHLGNRRVRCVGELAENQFRAGLVRVERAVKERLGQAESENLMPHDLINSKPISSAIREFFGSSQLSQFMDQTNPLSEITHKRRVSALGPGGLTRERAGFEVRDVHPTHYGRVCPIETPEGPNIGLINSLALYAHLNEYGFLETPYRKVTDGKVTDQIDYLSAIEEGRYVIAQANAAVAEDGTLTDELVSSREAGETLMVTPDRIQYMDVAPSQIVSVAASLIPFLEHDDANRALMGSNMQRQAVPCLRPEKPVVGTGIERTVAVDSGTTVQALRGGVVDYVDAGRIVIRVNDDEAVAGDVGVDIYNLIKYTRSNQNTNINQRPIAKVGDKVARGDVLADGASTDLGELALGQNMLVAFMPWNGYNFEDSILISEKVVADDRYTSIHIEELNVVARDTKLGPEEITRDISNLAEVQLGRLDESGIVYIGAEVEAGDVLVGKVTPKGETQLTPEEKLLRAIFGEKASDVKDTSLRVPSGMSGTVIDVQVFTREGIQRDKRAQQIIDDELKRYRLDLNDQLRIVEGDAFQRLARMLEGKVANGGPKKLAKGTKIERAYLEDLDHYHWFDIRLADEEAAAQLEAIKDSIEQKRHQFDLAFEEKRKKLTQGDELPPGVLKMVKVYLAVKRRLQPGDKMAGRHGNKGVVSKIVPIEDMPYMADGRPADVVLNPLGVPSRMNVGQVLEVHLGWAAKGLGWRIGEMLQRQARIEEVRAFLTKIYNESGRAEELESFSDDEILELAKNLREGVPFATPVFDGATEEEMSSMLDLAFPDDIAQNLGMTKSKNQVRLYDGRTGEAFERTVTVGYMHYLKLHHLVDDKMHARSTGPYSLVTQQPLGGKAQFGGQRFGEMEVWALEAYGASYVLQEMLTVKSDDVTGRTKVYENLVKGDHVIDAGMPESFNVLVKEIRSLGIDIDLDRN.

This sequence belongs to the RNA polymerase beta chain family. In terms of assembly, the RNAP catalytic core consists of 2 alpha, 1 beta, 1 beta' and 1 omega subunit. When a sigma factor is associated with the core the holoenzyme is formed, which can initiate transcription.

The enzyme catalyses RNA(n) + a ribonucleoside 5'-triphosphate = RNA(n+1) + diphosphate. DNA-dependent RNA polymerase catalyzes the transcription of DNA into RNA using the four ribonucleoside triphosphates as substrates. The sequence is that of DNA-directed RNA polymerase subunit beta from Paraburkholderia phymatum (strain DSM 17167 / CIP 108236 / LMG 21445 / STM815) (Burkholderia phymatum).